A 314-amino-acid chain; its full sequence is Flotillin-like protein FloA (314 aa).

Residues 4–24 (IGPIIIAVLIIIFLIVFFTLV) traverse the membrane as a helical segment.

This sequence belongs to the flotillin-like FloA family. As to quaternary structure, homooligomerizes.

The protein resides in the cell membrane. It localises to the membrane raft. Its function is as follows. Found in functional membrane microdomains (FMM) that may be equivalent to eukaryotic membrane rafts. FMMs are highly dynamic and increase in number as cells age. Flotillins are thought to be important factors in membrane fluidity. In Listeria innocua serovar 6a (strain ATCC BAA-680 / CLIP 11262), this protein is Flotillin-like protein FloA.